A 551-amino-acid polypeptide reads, in one-letter code: Probable CoA ligase CCL5 (551 aa).

Residues 204–212, 345–350, D431, 443–446, and K537 each bind ATP; these read SSGTTGASK, QGYGLT, and VVDR. Residues 274 to 345 are SBD1; the sequence is EIHEMLSAIE…ENYPTVSILQ (72 aa). Residues 346–410 form an SBD2 region; it reads GYGLTESTGI…LRGPTIMKGY (65 aa).

It belongs to the ATP-dependent AMP-binding enzyme family. In terms of tissue distribution, mostly expressed at low levels in glandular trichomes (lupulin glands) after flowering, and, to a lower extent, in stems, leaves, cones and flowers.

Its subcellular location is the cytoplasm. The protein localises to the cytosol. The protein is Probable CoA ligase CCL5 of Humulus lupulus (European hop).